A 322-amino-acid polypeptide reads, in one-letter code: MDNADPNEPVYPCPICGRKFVKSSLEKHESACRKLATLHRKPFDSGKQRANGSDLTYAAIKKAQNEKAKNGGVFPRPQTNWRERHGNFIDAVSSSKRVDYALKTGAPLPPPPKTAVPSDYVQCEYCSRNFNAAAAERHIPFCREQTTRKQGGKSSAGNRGLTSNNYRSLPSKHEGRKQESSSRNGSAERKTTTRGRDGSLSRARRDDSNDLTNRRKSLETRSQLTTGQANNRTTSLSAGTRPALPPMTPSSKRSSSAKRDLPPNPTTHQRLKTPAPKTTTTASASRSGSGSSSRTRTRDESRESRLSQAKSNSRNNSRSRIF.

C2HC/C3H-type zinc fingers lie at residues 9 to 38 and 119 to 148; these read PVYP…LATL and DYVQ…QTTR. The Zn(2+) site is built by Cys13, Cys16, His28, Cys32, Cys123, Cys126, His138, and Cys142. Positions 144 to 322 are disordered; the sequence is EQTTRKQGGK…SRNNSRSRIF (179 aa). Residues 148 to 168 are compositionally biased toward polar residues; it reads RKQGGKSSAGNRGLTSNNYRS. The segment covering 171–219 has biased composition (basic and acidic residues); it reads SKHEGRKQESSSRNGSAERKTTTRGRDGSLSRARRDDSNDLTNRRKSLE. Residues 220–238 show a composition bias toward polar residues; that stretch reads TRSQLTTGQANNRTTSLSA. Over residues 278 to 294 the composition is skewed to low complexity; it reads TTTTASASRSGSGSSSR. Over residues 296–305 the composition is skewed to basic and acidic residues; that stretch reads RTRDESRESR. Residues 311–322 show a composition bias toward low complexity; sequence SNSRNNSRSRIF.

It belongs to the ZC2HC1 family. It depends on Zn(2+) as a cofactor.

In Caenorhabditis briggsae, this protein is Zinc finger C2HC domain-containing protein CBG14627.